A 231-amino-acid polypeptide reads, in one-letter code: Cytochrome c oxidase subunit 2 (231 aa).

Residues 1-14 lie on the Mitochondrial intermembrane side of the membrane; that stretch reads MAHPAQLGLQNATS. A helical membrane pass occupies residues 15 to 45; that stretch reads PIMEELIAFHDHALMIIFLISSLVLYVISLM. The Mitochondrial matrix portion of the chain corresponds to 46-59; that stretch reads LTTKLTHTSTMNAQ. The chain crosses the membrane as a helical span at residues 60-87; sequence EIEMIWTILPAIILIMIALPSLRILYMT. Residues 88–231 are Mitochondrial intermembrane-facing; that stretch reads DEFNKPYLTL…WASYLYIVSL (144 aa). Cu cation contacts are provided by His-161, Cys-196, Glu-198, Cys-200, His-204, and Met-207. Position 198 (Glu-198) interacts with Mg(2+).

The protein belongs to the cytochrome c oxidase subunit 2 family. As to quaternary structure, component of the cytochrome c oxidase (complex IV, CIV), a multisubunit enzyme composed of 14 subunits. The complex is composed of a catalytic core of 3 subunits MT-CO1, MT-CO2 and MT-CO3, encoded in the mitochondrial DNA, and 11 supernumerary subunits COX4I, COX5A, COX5B, COX6A, COX6B, COX6C, COX7A, COX7B, COX7C, COX8 and NDUFA4, which are encoded in the nuclear genome. The complex exists as a monomer or a dimer and forms supercomplexes (SCs) in the inner mitochondrial membrane with NADH-ubiquinone oxidoreductase (complex I, CI) and ubiquinol-cytochrome c oxidoreductase (cytochrome b-c1 complex, complex III, CIII), resulting in different assemblies (supercomplex SCI(1)III(2)IV(1) and megacomplex MCI(2)III(2)IV(2)). Found in a complex with TMEM177, COA6, COX18, COX20, SCO1 and SCO2. Interacts with TMEM177 in a COX20-dependent manner. Interacts with COX20. Interacts with COX16. It depends on Cu cation as a cofactor.

Its subcellular location is the mitochondrion inner membrane. It carries out the reaction 4 Fe(II)-[cytochrome c] + O2 + 8 H(+)(in) = 4 Fe(III)-[cytochrome c] + 2 H2O + 4 H(+)(out). Component of the cytochrome c oxidase, the last enzyme in the mitochondrial electron transport chain which drives oxidative phosphorylation. The respiratory chain contains 3 multisubunit complexes succinate dehydrogenase (complex II, CII), ubiquinol-cytochrome c oxidoreductase (cytochrome b-c1 complex, complex III, CIII) and cytochrome c oxidase (complex IV, CIV), that cooperate to transfer electrons derived from NADH and succinate to molecular oxygen, creating an electrochemical gradient over the inner membrane that drives transmembrane transport and the ATP synthase. Cytochrome c oxidase is the component of the respiratory chain that catalyzes the reduction of oxygen to water. Electrons originating from reduced cytochrome c in the intermembrane space (IMS) are transferred via the dinuclear copper A center (CU(A)) of subunit 2 and heme A of subunit 1 to the active site in subunit 1, a binuclear center (BNC) formed by heme A3 and copper B (CU(B)). The BNC reduces molecular oxygen to 2 water molecules using 4 electrons from cytochrome c in the IMS and 4 protons from the mitochondrial matrix. The protein is Cytochrome c oxidase subunit 2 (MT-CO2) of Alouatta palliata (Mantled howler monkey).